The sequence spans 287 residues: mRNA-capping enzyme small subunit (287 aa).

As to quaternary structure, heterodimer of a large and a small subunit.

The protein localises to the virion. The enzyme catalyses a 5'-end (5'-triphosphoguanosine)-ribonucleoside in mRNA + S-adenosyl-L-methionine = a 5'-end (N(7)-methyl 5'-triphosphoguanosine)-ribonucleoside in mRNA + S-adenosyl-L-homocysteine. Catalyzes the last reaction in the mRNA cap formation pathway. In Erythrocebus patas (Red guenon), this protein is mRNA-capping enzyme small subunit.